Reading from the N-terminus, the 750-residue chain is Photosystem I P700 chlorophyll a apoprotein A1 (750 aa).

8 helical membrane-spanning segments follow: residues 70 to 93, 156 to 179, 195 to 219, 291 to 309, 346 to 369, 385 to 411, 433 to 455, and 531 to 549; these read VFSA…FHGA, LYCT…FHYH, LNHH…HVSL, IAHH…GHMY, WHAQ…HHMY, LSLF…IFMV, AIIS…LYIH, and FLVH…LILL. Residues Cys573 and Cys582 each coordinate [4Fe-4S] cluster. The next 2 helical transmembrane spans lie at 589 to 610 and 664 to 686; these read HVFL…HFSW and LSAY…MFLF. Chlorophyll a' is bound at residue His675. Residues Met683 and Tyr691 each contribute to the chlorophyll a site. Residue Trp692 coordinates phylloquinone. Residues 724–744 traverse the membrane as a helical segment; that stretch reads AVGVTHYLLGGIATTWAFFLA.

It belongs to the PsaA/PsaB family. As to quaternary structure, the PsaA/B heterodimer binds the P700 chlorophyll special pair and subsequent electron acceptors. PSI consists of a core antenna complex that captures photons, and an electron transfer chain that converts photonic excitation into a charge separation. The eukaryotic PSI reaction center is composed of at least 11 subunits. It depends on P700 is a chlorophyll a/chlorophyll a' dimer, A0 is one or more chlorophyll a, A1 is one or both phylloquinones and FX is a shared 4Fe-4S iron-sulfur center. as a cofactor.

Its subcellular location is the plastid. The protein resides in the chloroplast thylakoid membrane. It catalyses the reaction reduced [plastocyanin] + hnu + oxidized [2Fe-2S]-[ferredoxin] = oxidized [plastocyanin] + reduced [2Fe-2S]-[ferredoxin]. PsaA and PsaB bind P700, the primary electron donor of photosystem I (PSI), as well as the electron acceptors A0, A1 and FX. PSI is a plastocyanin-ferredoxin oxidoreductase, converting photonic excitation into a charge separation, which transfers an electron from the donor P700 chlorophyll pair to the spectroscopically characterized acceptors A0, A1, FX, FA and FB in turn. Oxidized P700 is reduced on the lumenal side of the thylakoid membrane by plastocyanin. In Eucalyptus globulus subsp. globulus (Tasmanian blue gum), this protein is Photosystem I P700 chlorophyll a apoprotein A1.